Here is a 213-residue protein sequence, read N- to C-terminus: Eukaryotic translation initiation factor isoform 4E (213 aa).

Residues 1 to 37 (MATEVAAAVPPPQLDAEENSGLEAAAAEAKIQPSSGP) form a disordered region. MRNA contacts are provided by residues 56–61 (QGAAWG), K88, and 106–107 (WE). C111 and C150 form a disulfide bridge. MRNA is bound by residues 157–162 (RQRQDK) and 202–205 (KRER).

Belongs to the eukaryotic initiation factor 4E family. As to quaternary structure, EIF4F is a multi-subunit complex, the composition of which varies with external and internal environmental conditions. It is composed of at least EIF4A, EIF4E and EIF4G. EIF4E is also known to interact with other partners. In higher plants two isoforms of EIF4F have been identified, named isoform EIF4F and isoform EIF(iso)4F. Isoform EIF4F has subunits p220 and p26, whereas isoform EIF(iso)4F has subunits p82 and p28. (Microbial infection) Interacts with potyvirus viral genome-linked protein (VPg) of plum pox virus (PPV) strain D both in nucleus and cytoplasm; this interaction is possible in susceptible hosts but is impaired in resistant plants. In terms of processing, according to the redox status, the Cys-111-Cys-150 disulfide bridge may have a role in regulating protein function by affecting its ability to bind capped mRNA. As to expression, mostly expressed in leaves, flower buds, leaf buds and anthers, to a lower extent in roots, stems and green immature fruit, and, at low levels, in petals.

The protein resides in the cytoplasm. It is found in the nucleus. Functionally, component of the protein complex eIF4F, which is involved in the recognition of the mRNA cap, ATP-dependent unwinding of 5'-terminal secondary structure and recruitment of mRNA to the ribosome. Recognizes and binds the 7-methylguanosine-containing mRNA cap during an early step in the initiation of protein synthesis and facilitates ribosome binding by inducing the unwinding of the mRNAs secondary structures. Key component of recessive resistance to potyviruses such as the plum pox virus (PPV) strain D. In terms of biological role, (Microbial infection) Susceptibility host factor required for viral infection by recruiting viral RNAs to the host ribosomal complex via an interaction with viral genome-linked protein (VPg). The sequence is that of Eukaryotic translation initiation factor isoform 4E from Prunus domestica (Garden plum).